The following is a 169-amino-acid chain: UPF0303 protein BruAb1_1406 (169 aa).

The protein belongs to the UPF0303 family.

In Brucella abortus biovar 1 (strain 9-941), this protein is UPF0303 protein BruAb1_1406.